Here is a 400-residue protein sequence, read N- to C-terminus: Cell division protein FtsZ 2 (400 aa).

Positions Met1–Arg16 are enriched in basic and acidic residues. The disordered stretch occupies residues Met1–Gly30. GTP contacts are provided by residues Gly41 to Asn45, Gly128 to Gly130, Glu159, Arg162, and Asp205. The disordered stretch occupies residues Val338–Arg400. The segment covering Gln352–Ser364 has biased composition (low complexity). The segment covering Gly365 to Trp382 has biased composition (polar residues). Over residues Gly385 to Arg400 the composition is skewed to basic and acidic residues.

The protein belongs to the FtsZ family. Homodimer. Polymerizes to form a dynamic ring structure in a strictly GTP-dependent manner. Interacts directly with several other division proteins. Interacts with SepF.

It localises to the cytoplasm. Its function is as follows. Essential cell division protein that forms a contractile ring structure (Z ring) at the future cell division site. The regulation of the ring assembly controls the timing and the location of cell division. One of the functions of the FtsZ ring is to recruit other cell division proteins to the septum to produce a new cell wall between the dividing cells. Binds GTP and shows GTPase activity. Required for division ring constriction. This Haloferax volcanii (strain ATCC 29605 / DSM 3757 / JCM 8879 / NBRC 14742 / NCIMB 2012 / VKM B-1768 / DS2) (Halobacterium volcanii) protein is Cell division protein FtsZ 2.